Reading from the N-terminus, the 327-residue chain is GMP reductase (327 aa).

Cys175 functions as the Thioimidate intermediate in the catalytic mechanism. 204–227 (IIADGGIRTHGDIAKSVRFGASMV) contacts NADP(+).

It belongs to the IMPDH/GMPR family. GuaC type 2 subfamily.

It carries out the reaction IMP + NH4(+) + NADP(+) = GMP + NADPH + 2 H(+). Its function is as follows. Catalyzes the irreversible NADPH-dependent deamination of GMP to IMP. It functions in the conversion of nucleobase, nucleoside and nucleotide derivatives of G to A nucleotides, and in maintaining the intracellular balance of A and G nucleotides. This chain is GMP reductase, found in Lysinibacillus sphaericus (strain C3-41).